The chain runs to 314 residues: Ribose-phosphate pyrophosphokinase (314 aa).

ATP-binding positions include 37–39 (DGE) and 96–97 (RQ). Mg(2+)-binding residues include His131 and Asp170. Residue Lys194 is part of the active site. D-ribose 5-phosphate is bound by residues Arg196, Asp220, and 224–228 (DTGGT).

This sequence belongs to the ribose-phosphate pyrophosphokinase family. Class I subfamily. In terms of assembly, homohexamer. Mg(2+) is required as a cofactor.

It localises to the cytoplasm. The catalysed reaction is D-ribose 5-phosphate + ATP = 5-phospho-alpha-D-ribose 1-diphosphate + AMP + H(+). It participates in metabolic intermediate biosynthesis; 5-phospho-alpha-D-ribose 1-diphosphate biosynthesis; 5-phospho-alpha-D-ribose 1-diphosphate from D-ribose 5-phosphate (route I): step 1/1. Involved in the biosynthesis of the central metabolite phospho-alpha-D-ribosyl-1-pyrophosphate (PRPP) via the transfer of pyrophosphoryl group from ATP to 1-hydroxyl of ribose-5-phosphate (Rib-5-P). This is Ribose-phosphate pyrophosphokinase from Vibrio parahaemolyticus serotype O3:K6 (strain RIMD 2210633).